The primary structure comprises 213 residues: 3-demethoxyubiquinol 3-hydroxylase (213 aa).

Fe cation-binding residues include Glu62, Glu92, His95, Glu144, Glu176, and His179.

Belongs to the COQ7 family. It depends on Fe cation as a cofactor.

The protein resides in the cell membrane. The enzyme catalyses a 5-methoxy-2-methyl-3-(all-trans-polyprenyl)benzene-1,4-diol + AH2 + O2 = a 3-demethylubiquinol + A + H2O. The protein operates within cofactor biosynthesis; ubiquinone biosynthesis. Functionally, catalyzes the hydroxylation of 2-nonaprenyl-3-methyl-6-methoxy-1,4-benzoquinol during ubiquinone biosynthesis. The protein is 3-demethoxyubiquinol 3-hydroxylase of Legionella pneumophila (strain Corby).